We begin with the raw amino-acid sequence, 89 residues long: DNA/RNA-binding protein Alba 2 (89 aa).

Belongs to the histone-like Alba family. Forms homodimers and homotetramers. Interacts with Alba 1.

The protein resides in the cytoplasm. It is found in the chromosome. Its function is as follows. Binds double-stranded DNA tightly but without sequence specificity. Involved in DNA compaction. This chain is DNA/RNA-binding protein Alba 2, found in Archaeoglobus fulgidus (strain ATCC 49558 / DSM 4304 / JCM 9628 / NBRC 100126 / VC-16).